A 372-amino-acid chain; its full sequence is MNSGIDLQRTFIQALVDLGLSSEIAKTLWLPFPMLLMIVVATVGVLVTVWLERKISAAAQQRIGPEFMGPLGTLAPLADGLKLLFKEDVVPAKADPLLFTLGPVIVAVPVFLSYLVVPFGQNLVITDLGVAIFLWIALSSIQPIGLLMSGYASNNKYSLLGGLRAAAQSISYEIPLALAVLAVAMMSNSLSTIDIVEQQSSYGILGWNIWRQPLGFIIFWIAVLAECERLPFDLPEAEEELVAGYQTEYTGMKFALYYLASYVNLVLSSLLVAVLYLGGWESPLPVELISNWFGVSETTPWLQITNATLGIIMTLLKTYLLVFIAVLLRWTLPRVRIDQLLDLGWKFLLPVALVNLLLTAALKLTFPFAFGG.

Helical transmembrane passes span 29 to 49 (WLPFPMLLMIVVATVGVLVTV), 97 to 117 (LLFTLGPVIVAVPVFLSYLVV), 128 to 148 (LGVAIFLWIALSSIQPIGLLM), 176 to 196 (LALAVLAVAMMSNSLSTIDIV), 204 to 224 (ILGWNIWRQPLGFIIFWIAVL), 254 to 274 (FALYYLASYVNLVLSSLLVAV), 308 to 328 (TLGIIMTLLKTYLLVFIAVLL), and 351 to 371 (VALVNLLLTAALKLTFPFAFG).

This sequence belongs to the complex I subunit 1 family. NDH-1 is composed of at least 11 different subunits.

The protein resides in the cellular thylakoid membrane. It catalyses the reaction a plastoquinone + NADH + (n+1) H(+)(in) = a plastoquinol + NAD(+) + n H(+)(out). The enzyme catalyses a plastoquinone + NADPH + (n+1) H(+)(in) = a plastoquinol + NADP(+) + n H(+)(out). Its function is as follows. NDH-1 shuttles electrons from an unknown electron donor, via FMN and iron-sulfur (Fe-S) centers, to quinones in the respiratory and/or the photosynthetic chain. The immediate electron acceptor for the enzyme in this species is believed to be plastoquinone. Couples the redox reaction to proton translocation, and thus conserves the redox energy in a proton gradient. This Trichodesmium erythraeum (strain IMS101) protein is NAD(P)H-quinone oxidoreductase subunit 1.